We begin with the raw amino-acid sequence, 898 residues long: Cilium assembly protein DZIP1 (898 aa).

Positions 14-66 are disordered; the sequence is DPPGTHSSAGIPSLLSSPQSQPSSGSQSRPAPSTMSGPLTSSGASTSIPPPFK. Low complexity predominate over residues 25–46; sequence PSLLSSPQSQPSSGSQSRPAPS. Residues 47–60 are compositionally biased toward polar residues; the sequence is TMSGPLTSSGASTS. The stretch at 145–197 forms a coiled coil; that stretch reads LSISLQAAEERLLAEAREREQICVQLQKKTQDAKALKEELKQRKKIIASQQAM. Residues 207 to 230 form a C2H2-type zinc finger; that stretch reads HKCQHCEKAFMNASFLQSHMQRRH. Coiled-coil stretches lie at residues 242–353 and 407–447; these read NQKK…VQTQ and SAVS…ISSK. Positions 435-463 are enriched in polar residues; it reads TSQNKQMKQISSKPPTITVQREGVSTPSP. Disordered stretches follow at residues 435–509, 585–739, and 773–878; these read TSQN…SWQK, EQRV…WTDG, and KSLE…DAGT. Positions 495–505 are enriched in low complexity; sequence SSISESPTENR. Residues 573–590 are a coiled coil; that stretch reads YRRALKEISHKLEQRVKE. Residues 605–652 show a composition bias toward polar residues; sequence VVQSRPRSSSFPSTVTRVMSGPASKQQRTPQPVPRSRTNVPHKTSTPL. Residues 662-684 show a composition bias toward acidic residues; the sequence is SDEDSSEEEEEEEEEEESSDEES. Composition is skewed to polar residues over residues 685 to 715 and 723 to 734; these read PQMQKKTVLVNSSTAKAQNTAKTQSTAQSVR and AEPTNVTTLSDS. Over residues 797-815 the composition is skewed to basic and acidic residues; the sequence is KPTDVRNTRQNAKKELKYS. Acidic residues predominate over residues 816–826; it reads DDDDDDDDDWD. Positions 855–866 are enriched in polar residues; the sequence is DTSTSVWGSSTG.

The protein belongs to the DZIP C2H2-type zinc-finger protein family. In terms of tissue distribution, expressed throughout the embryo starting at 12 hours.

It is found in the cell projection. The protein resides in the cilium. It localises to the cytoplasm. The protein localises to the cytoskeleton. Its subcellular location is the cilium basal body. It is found in the microtubule organizing center. The protein resides in the centrosome. It localises to the centriole. The protein localises to the nucleus. Molecular adapter that recruits protein complexes required for cilium assembly and function to the cilium basal body. Required for establishment of left-right asymmetry during embryogenesis. Acts as a permissive factor that is required for the proper regulation of Hedgehog (Hh) target genes in response to Hh signals. Acts downstream of the Smoothened protein to modulate Gli activity in the somites of the developing embryo. The sequence is that of Cilium assembly protein DZIP1 (dzip1) from Danio rerio (Zebrafish).